The following is a 479-amino-acid chain: Ribulose bisphosphate carboxylase large chain (479 aa).

Residues 1-2 constitute a propeptide that is removed on maturation; the sequence is MS. Position 3 is an N-acetylproline (P3). At K14 the chain carries N6,N6,N6-trimethyllysine. Substrate is bound by residues N123 and T173. The active-site Proton acceptor is K175. K177 contacts substrate. Mg(2+) is bound by residues K201, D203, and E204. An N6-carboxylysine modification is found at K201. Catalysis depends on H294, which acts as the Proton acceptor. 3 residues coordinate substrate: R295, H327, and S379.

This sequence belongs to the RuBisCO large chain family. Type I subfamily. In terms of assembly, heterohexadecamer of 8 large chains and 8 small chains. Mg(2+) is required as a cofactor.

It is found in the plastid. It localises to the chloroplast. It catalyses the reaction 2 (2R)-3-phosphoglycerate + 2 H(+) = D-ribulose 1,5-bisphosphate + CO2 + H2O. The enzyme catalyses D-ribulose 1,5-bisphosphate + O2 = 2-phosphoglycolate + (2R)-3-phosphoglycerate + 2 H(+). In terms of biological role, ruBisCO catalyzes two reactions: the carboxylation of D-ribulose 1,5-bisphosphate, the primary event in carbon dioxide fixation, as well as the oxidative fragmentation of the pentose substrate in the photorespiration process. Both reactions occur simultaneously and in competition at the same active site. The polypeptide is Ribulose bisphosphate carboxylase large chain (Jasminum nudiflorum (Winter jasmine)).